The chain runs to 389 residues: Dirigent protein 25 (389 aa).

The signal sequence occupies residues 1–21 (MAGCKVLFFLILALAITFVSA). 3 stretches are compositionally biased toward low complexity: residues 50–68 (GPFPTANSGPATGIASGTG), 77–86 (LGTNTGPGPL), and 98–135 (SSGTLPVTGPGPLPTSSGLLPGASSGNLPGSGSGPLPT). Residues 50-135 (GPFPTANSGP…PGSGSGPLPT (86 aa)) are disordered.

This sequence belongs to the plant dirigent protein family. As to quaternary structure, homodimer.

The protein localises to the secreted. It localises to the extracellular space. The protein resides in the apoplast. In terms of biological role, dirigent proteins impart stereoselectivity on the phenoxy radical-coupling reaction, yielding optically active lignans from two molecules of coniferyl alcohol in the biosynthesis of lignans, flavonolignans, and alkaloids and thus plays a central role in plant secondary metabolism. This is Dirigent protein 25 (DIR25) from Arabidopsis thaliana (Mouse-ear cress).